A 685-amino-acid polypeptide reads, in one-letter code: DNA-directed RNA polymerase subunit beta' (685 aa).

Zn(2+) contacts are provided by C69, C71, C87, and C90. Mg(2+) is bound by residues D489, D491, and D493.

This sequence belongs to the RNA polymerase beta' chain family. RpoC1 subfamily. In terms of assembly, in plastids the minimal PEP RNA polymerase catalytic core is composed of four subunits: alpha, beta, beta', and beta''. When a (nuclear-encoded) sigma factor is associated with the core the holoenzyme is formed, which can initiate transcription. Mg(2+) serves as cofactor. Requires Zn(2+) as cofactor.

It localises to the plastid. The protein resides in the chloroplast. The catalysed reaction is RNA(n) + a ribonucleoside 5'-triphosphate = RNA(n+1) + diphosphate. Functionally, DNA-dependent RNA polymerase catalyzes the transcription of DNA into RNA using the four ribonucleoside triphosphates as substrates. The sequence is that of DNA-directed RNA polymerase subunit beta' from Buxus microphylla (Littleleaf boxwood).